Consider the following 646-residue polypeptide: DNA mismatch repair protein MutL (646 aa).

2 disordered regions span residues 356–380 and 415–452; these read FENR…NENS and TKNS…AKPH. Over residues 424–436 the composition is skewed to low complexity; that stretch reads SEATSNEAASAEI.

The protein belongs to the DNA mismatch repair MutL/HexB family.

Functionally, this protein is involved in the repair of mismatches in DNA. It is required for dam-dependent methyl-directed DNA mismatch repair. May act as a 'molecular matchmaker', a protein that promotes the formation of a stable complex between two or more DNA-binding proteins in an ATP-dependent manner without itself being part of a final effector complex. This is DNA mismatch repair protein MutL from Staphylococcus carnosus (strain TM300).